The chain runs to 525 residues: Heat shock factor protein 1 (525 aa).

The residue at position 1 (M1) is an N-acetylmethionine. The interval V15–T120 is DNA-binding domain. K80 bears the N6-acetyllysine mark. K91 is modified (N6-acetyllysine; alternate). K91 participates in a covalent cross-link: Glycyl lysine isopeptide (Lys-Gly) (interchain with G-Cter in SUMO2); alternate. At K118 the chain carries N6-acetyllysine. S121 carries the phosphoserine; by MAPKAPK2 modification. Glycyl lysine isopeptide (Lys-Gly) (interchain with G-Cter in SUMO2) cross-links involve residues K126 and K131. Residues I130–L203 are hydrophobic repeat HR-A/B. The residue at position 142 (T142) is a Phosphothreonine; by CK2. An N6-acetyllysine mark is found at K150 and K188. The d domain stretch occupies residues L203–K224. K208 carries the post-translational modification N6-acetyllysine; alternate. K208 is covalently cross-linked (Glycyl lysine isopeptide (Lys-Gly) (interchain with G-Cter in SUMO2); alternate). S216 carries the phosphoserine; by PLK1 modification. Residues S221 to V310 form a regulatory domain region. K224 is covalently cross-linked (Glycyl lysine isopeptide (Lys-Gly) (interchain with G-Cter in SUMO2)). S230 is subject to Phosphoserine; by CAMK2A. Disordered regions lie at residues A272–P327 and P340–T365. A phosphoserine mark is found at S275 and S292. Position 298 is an N6-acetyllysine; alternate (K298). K298 is covalently cross-linked (Glycyl lysine isopeptide (Lys-Gly) (interchain with G-Cter in SUMO2); alternate). A Glycyl lysine isopeptide (Lys-Gly) (interchain with G-Cter in SUMO); alternate cross-link involves residue K298. A phosphoserine mark is found at S303, S307, S314, and S319. Position 320 is a phosphoserine; by PKA (S320). Residue T323 is modified to Phosphothreonine. The residue at position 326 (S326) is a Phosphoserine; by MAPK12. Polar residues predominate over residues A343–A355. The residue at position 345 (S345) is a Phosphoserine. The interval E367 to S525 is transactivation domain. The tract at residues L380–V405 is hydrophobic repeat HR-C. A 9aaTAD motif is present at residues S408–P416. Phosphoserine; by PLK1 is present on S415. S440 is modified (phosphoserine). 2 disordered regions span residues P441–Q460 and Y495–S525. Residues E515–S525 show a composition bias toward basic and acidic residues. K520 bears the N6-acetyllysine mark.

Belongs to the HSF family. In terms of assembly, monomer; cytoplasmic latent and transcriptionally inactive monomeric form in unstressed cells. Homotrimer; in response to stress, such as heat shock, homotrimerizes and translocates into the nucleus, binds to heat shock element (HSE) sequences in promoter of heat shock protein (HSP) genes and acquires transcriptional ability. Interacts (via monomeric form) with FKBP4; this interaction occurs in unstressed cells. Associates (via monomeric form) with HSP90 proteins in a multichaperone complex in unnstressed cell; this association maintains HSF1 in a non-DNA-binding and transcriptional inactive form by preventing HSF1 homotrimerization. Homotrimeric transactivation activity is modulated by protein-protein interactions and post-translational modifications. Interacts with HSP90AA1; this interaction is decreased in a IER5-dependent manner, promoting HSF1 accumulation in the nucleus, homotrimerization and DNA-binding activities. Part (via regulatory domain in the homotrimeric form) of a large heat shock-induced HSP90-dependent multichaperone complex at least composed of FKBP4, FKBP5, HSP90 proteins, PPID, PPP5C and PTGES3; this association maintains the HSF1 homotrimeric DNA-bound form in a transcriptionally inactive form. Interacts with BAG3 (via BAG domain); this interaction occurs in normal and heat-shocked cells promoting nuclear shuttling of HSF1 in a BAG3-dependent manner. Interacts (via homotrimeric and hyperphosphorylated form) with FKBP4; this interaction occurs upon heat shock in a HSP90-dependent multichaperone complex. Interacts (via homotrimeric form preferentially) with EEF1A proteins. In heat shocked cells, stress-denatured proteins compete with HSF1 homotrimeric DNA-bound form for association of the HSP90-dependent multichaperone complex, and hence alleviating repression of HSF1-mediated transcriptional activity. Interacts (via homotrimeric form preferentially) with DAXX; this interaction relieves homotrimeric HSF1 from repression of its transcriptional activity by HSP90-dependent multichaperone complex upon heat shock. Interacts (via D domain and preferentially with hyperphosphorylated form) with JNK1; this interaction occurs under both normal growth conditions and immediately upon heat shock. Interacts (via D domain and preferentially with hyperphosphorylated form) with MAPK3; this interaction occurs upon heat shock. Interacts with IER5 (via central region); this interaction promotes PPP2CA-induced dephosphorylation on Ser-121, Ser-307, Ser-314 and Thr-323 and HSF1 transactivation activity. Found in a ribonucleoprotein complex composed of the HSF1 homotrimeric form, translation elongation factor eEF1A proteins and non-coding RNA heat shock RNA-1 (HSR1); this complex occurs upon heat shock and stimulates HSF1 DNA-binding activity. Interacts (via transactivation domain) with HSPA1A/HSP70 and DNAJB1; these interactions result in the inhibition of heat shock- and HSF1-induced transcriptional activity during the attenuation and recovery phase from heat shock. Interacts (via Ser-303 and Ser-307 phosphorylated form) with YWHAE; this interaction promotes HSF1 sequestration in the cytoplasm in an ERK-dependent manner. Found in a complex with IER5 and PPP2CA. Interacts with TPR; this interaction increases upon heat shock and stimulates export of HSP70 mRNA. Interacts with SYMPK (via N-terminus) and CSTF2; these interactions occur upon heat shock. Interacts (via transactivation domain) with HSPA8. Interacts with EEF1D; this interaction occurs at heat shock promoter element (HSE) sequences. Interacts with MAPKAPK2. Interacts with PRKACA/PKA. Interacts (via transactivation domain) with GTF2A2. Interacts (via transactivation domain) with GTF2B. Interacts (via transactivation domain) with TBP. Interacts with CDK9, CCNT1 and EP300. Interacts (via N-terminus) with XRCC5 (via N-terminus) and XRCC6 (via N-terminus); these interactions are direct and prevent XRCC5/XRCC6 heterodimeric binding and non-homologous end joining (NHEJ) repair activities induced by ionizing radiation (IR). Interacts with PLK1; this interaction occurs during the early mitotic period, increases upon heat shock but does not modulate neither HSF1 homotrimerization and DNA-binding activities. Interacts (via Ser-216 phosphorylated form) with CDC20; this interaction occurs in mitosis in a MAD2L1-dependent manner and prevents PLK1-stimulated degradation of HSF1 by blocking the recruitment of the SCF(BTRC) ubiquitin ligase complex. Interacts with MAD2L1; this interaction occurs in mitosis. Interacts with BTRC; this interaction occurs during mitosis, induces its ubiquitin-dependent degradation following stimulus-dependent phosphorylation at Ser-216, a process inhibited by CDC20. Interacts with HSP90AA1 and HSP90AB1. Forms a complex with TTC5/STRAP and p300/EP300; these interactions augment chromatin-bound HSF1 and p300/EP300 histone acetyltransferase activity. Phosphorylated. Phosphorylated in unstressed cells; this phosphorylation is constitutive and implicated in the repression of HSF1 transcriptional activity. Phosphorylated on Ser-121 by MAPKAPK2; this phosphorylation promotes interaction with HSP90 proteins and inhibits HSF1 homotrimerization, DNA-binding and transactivation activities. Phosphorylation on Ser-303 by GSK3B/GSK3-beat and on Ser-307 by MAPK3 within the regulatory domain is involved in the repression of HSF1 transcriptional activity and occurs in a RAF1-dependent manner. Phosphorylation on Ser-303 and Ser-307 increases HSF1 nuclear export in a YWHAE- and XPO1/CRM1-dependent manner. Phosphorylation on Ser-307 is a prerequisite for phosphorylation on Ser-303. According to, Ser-303 is not phosphorylated in unstressed cells. Phosphorylated on Ser-415 by PLK1; phosphorylation promotes nuclear translocation upon heat shock. Hyperphosphorylated upon heat shock and during the attenuation and recovery phase period of the heat shock response. Phosphorylated on Thr-142; this phosphorylation increases HSF1 transactivation activity upon heat shock. Phosphorylation on Ser-230 by CAMK2A; this phosphorylation enhances HSF1 transactivation activity upon heat shock. Phosphorylation on Ser-326 by MAPK12; this phosphorylation enhances HSF1 nuclear translocation, homotrimerization and transactivation activities upon heat shock. Phosphorylated on Ser-320 by PRKACA/PKA; this phosphorylation promotes nuclear localization and transcriptional activity upon heat shock. Phosphorylated by MAPK8; this phosphorylation occurs upon heat shock, induces HSF1 translocation into nuclear stress bodies and negatively regulates transactivation activity. Neither basal nor stress-inducible phosphorylation on Ser-230, Ser-292, Ser-303, Ser-307, Ser-314, Ser-319, Ser-320, Thr-323, Ser-326, Ser-338, Ser-345, Ser-364 and Thr-365 within the regulatory domain is involved in the regulation of HSF1 subcellular localization or DNA-binding activity; however, it negatively regulates HSF1 transactivation activity. Phosphorylated on Ser-216 by PLK1 in the early mitotic period; this phosphorylation regulates HSF1 localization to the spindle pole, the recruitment of the SCF(BTRC) ubiquitin ligase complex inducing HSF1 degradation, and hence mitotic progression. Dephosphorylated on Ser-121, Ser-307, Ser-314 and Thr-323 by phosphatase PPP2CA in an IER5-dependent manner, leading to HSF1-mediated transactivation activity. Post-translationally, sumoylated with SUMO1 and SUMO2 upon heat shock in a ERK2-dependent manner. Sumoylated by SUMO1 on Lys-298; sumoylation occurs upon heat shock and promotes its localization to nuclear stress bodies and DNA-binding activity. Phosphorylation on Ser-303 and Ser-307 is probably a prerequisite for sumoylation. In terms of processing, acetylated on Lys-118; this acetylation is decreased in a IER5-dependent manner. Acetylated on Lys-118, Lys-208 and Lys-298; these acetylations occur in a EP300-dependent manner. Acetylated on Lys-80; this acetylation inhibits DNA-binding activity upon heat shock. Deacetylated on Lys-80 by SIRT1; this deacetylation increases DNA-binding activity. Ubiquitinated by SCF(BTRC) and degraded following stimulus-dependent phosphorylation at Ser-216 by PLK1 in mitosis. Polyubiquitinated. Undergoes proteasomal degradation upon heat shock and during the attenuation and recovery phase period of the heat shock response.

The protein localises to the nucleus. Its subcellular location is the cytoplasm. It is found in the nucleoplasm. The protein resides in the perinuclear region. It localises to the cytoskeleton. The protein localises to the spindle pole. Its subcellular location is the microtubule organizing center. It is found in the centrosome. The protein resides in the chromosome. It localises to the centromere. The protein localises to the kinetochore. In terms of biological role, functions as a stress-inducible and DNA-binding transcription factor that plays a central role in the transcriptional activation of the heat shock response (HSR), leading to the expression of a large class of molecular chaperones, heat shock proteins (HSPs), that protect cells from cellular insult damage. In unstressed cells, is present in a HSP90-containing multichaperone complex that maintains it in a non-DNA-binding inactivated monomeric form. Upon exposure to heat and other stress stimuli, undergoes homotrimerization and activates HSP gene transcription through binding to site-specific heat shock elements (HSEs) present in the promoter regions of HSP genes. Upon heat shock stress, forms a chromatin-associated complex with TTC5/STRAP and p300/EP300 to stimulate HSR transcription, therefore increasing cell survival. Activation is reversible, and during the attenuation and recovery phase period of the HSR, returns to its unactivated form. Binds to inverted 5'-NGAAN-3' pentamer DNA sequences. Binds to chromatin at heat shock gene promoters. Activates transcription of transcription factor FOXR1 which in turn activates transcription of the heat shock chaperones HSPA1A and HSPA6 and the antioxidant NADPH-dependent reductase DHRS2. Binds the promoter region upstream of exon 1 of Mpv17l to activate expression of the M-LPS isoform which is involved in metabolism of reactive oxygen species. Also serves several other functions independently of its transcriptional activity. Involved in the repression of Ras-induced transcriptional activation of the c-fos gene in heat-stressed cells. Positively regulates pre-mRNA 3'-end processing and polyadenylation of HSP70 mRNA upon heat-stressed cells in a symplekin (SYMPK)-dependent manner. Plays a role in nuclear export of stress-induced HSP70 mRNA. Plays a role in the regulation of mitotic progression. Also plays a role as a negative regulator of non-homologous end joining (NHEJ) repair activity in a DNA damage-dependent manner. Involved in stress-induced cancer cell proliferation in a IER5-dependent manner. This Mus musculus (Mouse) protein is Heat shock factor protein 1.